Here is a 279-residue protein sequence, read N- to C-terminus: Urease accessory protein UreD (279 aa).

Belongs to the UreD family. UreD, UreF and UreG form a complex that acts as a GTP-hydrolysis-dependent molecular chaperone, activating the urease apoprotein by helping to assemble the nickel containing metallocenter of UreC. The UreE protein probably delivers the nickel.

The protein localises to the cytoplasm. Required for maturation of urease via the functional incorporation of the urease nickel metallocenter. This chain is Urease accessory protein UreD, found in Brucella suis (strain ATCC 23445 / NCTC 10510).